Here is a 271-residue protein sequence, read N- to C-terminus: PH domain-containing protein ECU06_0670 (271 aa).

Positions 26 to 145 (AKKTLDSSES…EKKNDAFIPP (120 aa)) are disordered. Basic and acidic residues-rich tracts occupy residues 42-64 (EVGEVDEVKGMETDAEKKDEPAM), 92-120 (QPEKQEAADGEDSSKKESPREEQTPLLDK), and 128-140 (EENAKPSSEKKND). One can recognise a PH domain in the interval 166–267 (NTVVEGWMWK…WVEKLNETIR (102 aa)).

In Encephalitozoon cuniculi (strain GB-M1) (Microsporidian parasite), this protein is PH domain-containing protein ECU06_0670.